Consider the following 432-residue polypeptide: C4-dicarboxylate transport protein (432 aa).

8 consecutive transmembrane segments (helical) span residues I8–P28, L44–M64, L78–L98, G148–G168, I188–I208, L222–A242, I307–M327, and A355–I375.

This sequence belongs to the dicarboxylate/amino acid:cation symporter (DAACS) (TC 2.A.23) family.

It localises to the cell inner membrane. In terms of biological role, responsible for the transport of dicarboxylates such as succinate, fumarate, and malate from the periplasm across the membrane. This Cupriavidus necator (strain ATCC 17699 / DSM 428 / KCTC 22496 / NCIMB 10442 / H16 / Stanier 337) (Ralstonia eutropha) protein is C4-dicarboxylate transport protein.